The chain runs to 496 residues: Cytosol aminopeptidase (496 aa).

Residues Lys258 and Asp263 each contribute to the Mn(2+) site. Lys270 is an active-site residue. Positions 281, 340, and 342 each coordinate Mn(2+). Residue Arg344 is part of the active site.

It belongs to the peptidase M17 family. Mn(2+) is required as a cofactor.

The protein resides in the cytoplasm. The enzyme catalyses Release of an N-terminal amino acid, Xaa-|-Yaa-, in which Xaa is preferably Leu, but may be other amino acids including Pro although not Arg or Lys, and Yaa may be Pro. Amino acid amides and methyl esters are also readily hydrolyzed, but rates on arylamides are exceedingly low.. It catalyses the reaction Release of an N-terminal amino acid, preferentially leucine, but not glutamic or aspartic acids.. Presumably involved in the processing and regular turnover of intracellular proteins. Catalyzes the removal of unsubstituted N-terminal amino acids from various peptides. This Helicobacter pylori (strain ATCC 700392 / 26695) (Campylobacter pylori) protein is Cytosol aminopeptidase (pepA).